We begin with the raw amino-acid sequence, 348 residues long: Glycerol-1-phosphate dehydrogenase [NAD(P)+] (348 aa).

Residues 94 to 98 and threonine 116 contribute to the NAD(+) site; that span reads GKVID. Substrate is bound at residue aspartate 121. Serine 125 serves as a coordination point for NAD(+). Residue aspartate 168 coordinates substrate. Positions 168 and 248 each coordinate Zn(2+). Histidine 252 provides a ligand contact to substrate. Residue histidine 264 participates in Zn(2+) binding.

It belongs to the glycerol-1-phosphate dehydrogenase family. As to quaternary structure, homooctamer. It depends on Zn(2+) as a cofactor.

The protein localises to the cytoplasm. The enzyme catalyses sn-glycerol 1-phosphate + NAD(+) = dihydroxyacetone phosphate + NADH + H(+). It catalyses the reaction sn-glycerol 1-phosphate + NADP(+) = dihydroxyacetone phosphate + NADPH + H(+). It participates in membrane lipid metabolism; glycerophospholipid metabolism. Functionally, catalyzes the NAD(P)H-dependent reduction of dihydroxyacetonephosphate (DHAP or glycerone phosphate) to glycerol 1-phosphate (G1P). The G1P thus generated is used as the glycerophosphate backbone of phospholipids in the cellular membranes of Archaea. In Methanosphaera stadtmanae (strain ATCC 43021 / DSM 3091 / JCM 11832 / MCB-3), this protein is Glycerol-1-phosphate dehydrogenase [NAD(P)+].